Reading from the N-terminus, the 265-residue chain is MEVVARVLLGVNKTNMACQEQPIVPRLVLEVNKNKNVCIAANTPCFVVDGVLMVEQLKTHIKSRMFSNKFVGFVMACFVENEDMVDSINMFPHVFSSRLFIYNPCNHILLEMCGLLSMLKNLNTPSSSLLSAIVERAYYLWTKSRCPDATFLLHGIKTLASTSSYFYGINAPVESIVSPLLMFKLYKCIEDGDPVSKGLLKPIYLTSWKMDTQYDAPSKDLSEKCVFNLFYCNTVFTKHLQHKEVLKLFKCVCTTSTPRSNILSQ.

Belongs to the herpesviridae cytoplasmic envelopment protein 1 family.

It is found in the virion. It localises to the virion tegument. The protein resides in the host cytoplasm. The protein localises to the host Golgi apparatus. Its function is as follows. Plays a critical role in cytoplasmic virus egress. Participates in the final step of tegumentation and envelope acquisition within the host cytoplasm. The polypeptide is Cytoplasmic envelopment protein 1 (42) (Saimiriine herpesvirus 2 (strain 11) (SaHV-2)).